Reading from the N-terminus, the 347-residue chain is Histone deacetylase 11 (347 aa).

The histone deacetylase stretch occupies residues 14-318; the sequence is KRWPIVYSPR…ARIIADSILN (305 aa). H143 is an active-site residue.

Belongs to the histone deacetylase family. Interacts with HDAC6.

The protein localises to the nucleus. The enzyme catalyses N(6)-acetyl-L-lysyl-[histone] + H2O = L-lysyl-[histone] + acetate. Its function is as follows. Responsible for the deacetylation of lysine residues on the N-terminal part of the core histones (H2A, H2B, H3 and H4). Histone deacetylation gives a tag for epigenetic repression and plays an important role in transcriptional regulation, cell cycle progression and developmental events. Histone deacetylases act via the formation of large multiprotein complexes. This chain is Histone deacetylase 11 (Hdac11), found in Mus musculus (Mouse).